The following is a 386-amino-acid chain: Succinate--CoA ligase [ADP-forming] subunit beta (386 aa).

An ATP-grasp domain is found at 9–244 (KELLRDYGVP…LNEEDEKEIE (236 aa)). ATP is bound by residues Lys-46, 53–55 (GRG), Glu-99, Cys-102, and Glu-107. Mg(2+) contacts are provided by Asn-199 and Asp-213. Substrate contacts are provided by residues Asn-264 and 321–323 (GIM).

The protein belongs to the succinate/malate CoA ligase beta subunit family. In terms of assembly, heterotetramer of two alpha and two beta subunits. It depends on Mg(2+) as a cofactor.

The catalysed reaction is succinate + ATP + CoA = succinyl-CoA + ADP + phosphate. The enzyme catalyses GTP + succinate + CoA = succinyl-CoA + GDP + phosphate. It participates in carbohydrate metabolism; tricarboxylic acid cycle; succinate from succinyl-CoA (ligase route): step 1/1. Its function is as follows. Succinyl-CoA synthetase functions in the citric acid cycle (TCA), coupling the hydrolysis of succinyl-CoA to the synthesis of either ATP or GTP and thus represents the only step of substrate-level phosphorylation in the TCA. The beta subunit provides nucleotide specificity of the enzyme and binds the substrate succinate, while the binding sites for coenzyme A and phosphate are found in the alpha subunit. The chain is Succinate--CoA ligase [ADP-forming] subunit beta from Alkaliphilus oremlandii (strain OhILAs) (Clostridium oremlandii (strain OhILAs)).